The sequence spans 335 residues: Ubiquinone biosynthesis protein COQ4, mitochondrial (335 aa).

The N-terminal 10 residues, 1–10 (MLRLSLLRST), are a transit peptide targeting the mitochondrion. Residues histidine 210, aspartate 211, histidine 214, and glutamate 226 each coordinate Zn(2+).

It belongs to the COQ4 family. As to quaternary structure, component of a multi-subunit COQ enzyme complex, composed of at least COQ3, COQ4, COQ5, COQ6, COQ7 and COQ9. Interacts with COQ3. Zn(2+) serves as cofactor.

It is found in the mitochondrion inner membrane. The catalysed reaction is 4-hydroxy-3-methoxy-5-(all-trans-hexaprenyl)benzoate + H(+) = 2-methoxy-6-(all-trans-hexaprenyl)phenol + CO2. Its pathway is cofactor biosynthesis; ubiquinone biosynthesis. Functionally, lyase that catalyzes the C1-decarboxylation of 4-hydroxy-3-methoxy-5-(all-trans-hexaprenyl)benzoic acid into 2-methoxy-6-(all-trans-hexaprenyl)phenol during ubiquinone biosynthesis. May play a role in organizing a multi-subunit COQ enzyme complex required for coenzyme Q biosynthesis. Required for steady-state levels of COQ3, COQ4, COQ6, COQ7 and COQ9 polypeptides. This Saccharomyces cerevisiae (strain ATCC 204508 / S288c) (Baker's yeast) protein is Ubiquinone biosynthesis protein COQ4, mitochondrial.